Consider the following 152-residue polypeptide: Isoquinoline 1-oxidoreductase subunit alpha (152 aa).

Positions 1 to 77 (MIEFILNGQP…RQSVTTIEGL (77 aa)) constitute a 2Fe-2S ferredoxin-type domain. [2Fe-2S] cluster contacts are provided by Cys-39, Cys-44, and Cys-47.

As to quaternary structure, heterodimer of an alpha chain and a beta chain.

It carries out the reaction isoquinoline + A + H2O = isoquinolin-1(2H)-one + AH2. In terms of biological role, specific towards N-containing N-heterocyclic substrates, including isoquinoline, isoquinolin-5-ol, phthalazine and quinazoline. This chain is Isoquinoline 1-oxidoreductase subunit alpha (iorA), found in Brevundimonas diminuta (Pseudomonas diminuta).